Here is a 168-residue protein sequence, read N- to C-terminus: Protein OPG162 (168 aa).

A helical transmembrane segment spans residues 15–37; that stretch reads LSVPAAIMMLLSTIISGIGTFLH. 2 disulfides stabilise this stretch: Cys75-Cys162 and Cys141-Cys154. The N-linked (GlcNAc...) asparagine; by host glycan is linked to Asn133.

It belongs to the orthopoxvirus OPG162 protein family. In terms of assembly, interacts with protein OPG161. Interacts with protein OPG164. Interacts with protein OPG190.

It is found in the virion membrane. The protein resides in the host Golgi apparatus. Its function is as follows. Forms a complex with OPG162 and OPG190 to coordinate the incorporation of OPG164 into wrapped enveloped virion (EV) membranes and, subsequently, the production of actin tails. Therefore plays an essential role in efficient cell-to-cell spread of viral particles. The protein is Protein OPG162 (OPG162) of Monkeypox virus.